The following is a 115-amino-acid chain: LSM complex subunit LSM7 (115 aa).

Over residues 1–10 (MHQQHSKSEN) the composition is skewed to basic and acidic residues. The segment at 1–23 (MHQQHSKSENKPQQQRKKFEGPK) is disordered. A Sm domain is found at 25–108 (EAILDLAKYK…LVSLSSAEGS (84 aa)).

Belongs to the snRNP Sm proteins family. As to quaternary structure, component of the heptameric LSM1-LSM7 complex that forms a seven-membered ring structure with a donut shape. The LSm subunits are arranged in the order LSM1, LSM2, LSM3, LSM6, LSM5, LSM7 and LSM4. Except for LSM1, where a C-terminal helix crosses the ring structure to form additional interactions with LSM3 and LSM6, each subunit interacts only with its two neighboring subunits. The LSM1-LSM7 complex interacts with PAT1; within the complex PAT1 has direct interactions with LSM2 and LSM3. The LSM1-LSM7 complex interacts with XRN1. Component of the heptameric LSM2-LSM8 complex that forms a seven-membered ring structure with a donut shape; an RNA strand can pass through the hole in the center of the ring structure. The LSm subunits are arranged in the order LSM8, LSM2, LSM3, LSM6, LSM5, LSM7 and LSM4. Component of the spliceosome U4/U6-U5 tri-snRNP complex composed of the U4, U6 and U5 snRNAs and at least PRP3, PRP4, PRP6, PRP8, PRP18, PRP31, PRP38, SNU13, SNU23, SNU66, SNU114, SPP381, SMB1, SMD1, SMD2, SMD3, SMX2, SMX3, LSM2, LSM3, LSM4, LSM5, LSM6, LSM7, LSM8, BRR2 and DIB1. May be found in a complex comprising LSM2-LSM7 without LSM1 or LSM8; the complex associates with pre-P RNA and snoRNA SNR5.

The protein localises to the nucleus. The protein resides in the nucleolus. Its subcellular location is the cytoplasm. In terms of biological role, component of LSm protein complexes, which are involved in RNA processing and may function in a chaperone-like manner. Component of the cytoplasmic LSM1-LSM7 complex which is involved in mRNA degradation by activating the decapping step. Together with PAT1, the LSM1-LSM7 complex binds to osmotic stress-activated mRNAs to attenuate the osmotic stress response, probably by limiting ribosome access to the mRNA and consequently translation. Component of the nuclear LSM2-LSM8 complex, which is involved in spliceosome assembly. The LSM2-LSM8 complex plays a role in the biogenesis of the spliceosomal U4/U6-U5 tri-snRNP complex by accelerating PRP24-mediated annealing of U4/U6 di-snRNA. The LSM2-LSM8 complex binds U6 snRNA terminating with a non-cyclic 3' phosphate group. LSM2-LSM8 is probably also involved in degradation of nuclear pre-mRNA by targeting them for decapping. LSM2-LSM8 could be involved in processing of pre-tRNAs, pre-rRNAs and U3 snoRNA, although involvement may be indirect. In a complex that probably contains LSM2-LSM7, but not LSM1 or LSM8, associates with the precursor of the RNA component of RNase P (pre-P RNA) and may be involved in maturing pre-P RNA; the complex also associates with snoRNA SNR5. The polypeptide is LSM complex subunit LSM7 (LSM7) (Saccharomyces cerevisiae (strain ATCC 204508 / S288c) (Baker's yeast)).